The primary structure comprises 612 residues: tRNA(Met) cytidine acetyltransferase TmcA (612 aa).

Residues Gln136, 161-170, and Arg284 contribute to the ATP site; that span reads GRGKSTLLGQ. The N-acetyltransferase domain occupies 319–499; that stretch reads KHASELEEAL…PAAIYALPLT (181 aa). Position 424–426 (424–426) interacts with acetyl-CoA; the sequence is IAV.

The protein belongs to the RNA cytidine acetyltransferase family. TmcA subfamily.

It is found in the cytoplasm. The catalysed reaction is cytidine(34) in elongator tRNA(Met) + acetyl-CoA + ATP + H2O = N(4)-acetylcytidine(34) in elongator tRNA(Met) + ADP + phosphate + CoA + H(+). Functionally, catalyzes the formation of N(4)-acetylcytidine (ac(4)C) at the wobble position of tRNA(Met), by using acetyl-CoA as an acetyl donor and ATP (or GTP). The polypeptide is tRNA(Met) cytidine acetyltransferase TmcA (Idiomarina loihiensis (strain ATCC BAA-735 / DSM 15497 / L2-TR)).